The sequence spans 736 residues: Dimethylamine dehydrogenase (736 aa).

Residue Cys31 is modified to S-6-FMN cysteine. 176–179 (YGAH) contributes to the substrate binding site. Tyr181 (proton donor) is an active-site residue. 2 residues coordinate FMN: Arg229 and Arg329. Residues Cys352, Cys355, Cys358, and Cys371 each contribute to the [4Fe-4S] cluster site. 398–427 (DVLIVGAGPAGSECARVLMERGYTVHLVDT) lines the ADP pocket.

This sequence in the N-terminal section; belongs to the NADH:flavin oxidoreductase/NADH oxidase family. The cofactor is FMN. [4Fe-4S] cluster serves as cofactor.

It carries out the reaction dimethylamine + oxidized [electron-transfer flavoprotein] + H2O + H(+) = methylamine + reduced [electron-transfer flavoprotein] + formaldehyde. The chain is Dimethylamine dehydrogenase (dmd) from Hyphomicrobium sp. (strain x).